A 94-amino-acid chain; its full sequence is Co-chaperonin GroES (94 aa).

This sequence belongs to the GroES chaperonin family. As to quaternary structure, heptamer of 7 subunits arranged in a ring. Interacts with the chaperonin GroEL.

It localises to the cytoplasm. In terms of biological role, together with the chaperonin GroEL, plays an essential role in assisting protein folding. The GroEL-GroES system forms a nano-cage that allows encapsulation of the non-native substrate proteins and provides a physical environment optimized to promote and accelerate protein folding. GroES binds to the apical surface of the GroEL ring, thereby capping the opening of the GroEL channel. This chain is Co-chaperonin GroES, found in Ehrlichia chaffeensis (strain ATCC CRL-10679 / Arkansas).